The chain runs to 508 residues: GATA zinc finger domain-containing protein 13 (508 aa).

Disordered stretches follow at residues 20–51 (YSKNNNNNNNNNNNNNINNNNNNNNNNNINNN) and 203–296 (MSII…PEIE). The segment covering 23–51 (NNNNNNNNNNNNNINNNNNNNNNNNINNN) has biased composition (low complexity). Polar residues predominate over residues 203 to 224 (MSIIPSDNFPTPQLPLETNTDL). Over residues 225-247 (NNTSDCSSTTFSSPPSSAFNSPN) the composition is skewed to low complexity. The segment covering 248–266 (LQNDYTQPQNQKSQSSTIV) has biased composition (polar residues). The segment covering 269-279 (NSSKSKSKNNK) has biased composition (basic residues). A GATA-type zinc finger spans residues 327–354 (CSICKIKCSIYWRRILINEVRTSVCNAC). The stretch at 356-433 (LRTMKKTKKE…NNNNNNNNNN (78 aa)) forms a coiled coil. A compositionally biased stretch (low complexity) spans 399 to 482 (TTTTTTTTTS…NNNNNDNYND (84 aa)). Residues 399 to 484 (TTTTTTTTTS…NNNDNYNDSI (86 aa)) form a disordered region.

This chain is GATA zinc finger domain-containing protein 13 (gtaM), found in Dictyostelium discoideum (Social amoeba).